Consider the following 143-residue polypeptide: MTRIVVTAEIRPSEDEDKVKVAVANFFSFKSSKVEEGKYRLFVAESDTLSSLSKFHRVLREERILDAARKYLRRGIEGDRLTFMIHKQAAYVGKITFVDSENESPLGPITYTVFHRDLEAVVDWLAPRTSRGRPLWDNPMPED.

It belongs to the UPF0201 family.

This chain is UPF0201 protein Msed_1787, found in Metallosphaera sedula (strain ATCC 51363 / DSM 5348 / JCM 9185 / NBRC 15509 / TH2).